Reading from the N-terminus, the 399-residue chain is Digeranylgeranylglycerophospholipid reductase (399 aa).

FAD is bound by residues G15, E34, C45, A46, G48, R99, A123, D280, G292, and I293.

It belongs to the geranylgeranyl reductase family. DGGGPL reductase subfamily. FAD is required as a cofactor.

The enzyme catalyses a 2,3-bis-O-phytanyl-sn-glycerol 1-phospholipid + 8 oxidized 2[4Fe-4S]-[ferredoxin] = a 2,3-bis-O-(geranylgeranyl)-sn-glycerol 1-phospholipid + 8 reduced 2[4Fe-4S]-[ferredoxin] + 16 H(+). The catalysed reaction is 2,3-bis-O-(phytanyl)-sn-glycerol 1-phosphate + 8 oxidized 2[4Fe-4S]-[ferredoxin] = 2,3-bis-O-(geranylgeranyl)-sn-glycerol 1-phosphate + 8 reduced 2[4Fe-4S]-[ferredoxin] + 16 H(+). It carries out the reaction a 2,3-bis-O-phytanyl-sn-glycerol 1-phospholipid + 8 A = a 2,3-bis-O-(geranylgeranyl)-sn-glycerol 1-phospholipid + 8 AH2. It catalyses the reaction CDP-2,3-bis-O-(geranylgeranyl)-sn-glycerol + 8 AH2 = CDP-2,3-bis-O-(phytanyl)-sn-glycerol + 8 A. The enzyme catalyses archaetidylserine + 8 AH2 = 2,3-bis-O-phytanyl-sn-glycero-3-phospho-L-serine + 8 A. It participates in membrane lipid metabolism; glycerophospholipid metabolism. In terms of biological role, is involved in the reduction of 2,3-digeranylgeranylglycerophospholipids (unsaturated archaeols) into 2,3-diphytanylglycerophospholipids (saturated archaeols) in the biosynthesis of archaeal membrane lipids. Catalyzes the formation of archaetidic acid (2,3-di-O-phytanyl-sn-glyceryl phosphate) from 2,3-di-O-geranylgeranylglyceryl phosphate (DGGGP) via the hydrogenation of each double bond of the isoprenoid chains. Is also probably able to reduce double bonds of geranyl groups in CDP-2,3-bis-O-(geranylgeranyl)-sn-glycerol and archaetidylserine, thus acting at various stages in the biosynthesis of archaeal membrane lipids. This is Digeranylgeranylglycerophospholipid reductase from Methanosphaerula palustris (strain ATCC BAA-1556 / DSM 19958 / E1-9c).